The sequence spans 74 residues: Pelophylaxin-3 (74 aa).

The signal sequence occupies residues 1–22 (MFTLKKSLLLVFFLGTISLSLC). A propeptide spanning residues 23 to 39 (EDERNADEDDGEMTEEV) is cleaved from the precursor. The cysteines at positions 68 and 74 are disulfide-linked.

In terms of tissue distribution, expressed by the skin glands.

Its subcellular location is the secreted. In terms of biological role, antimicrobial peptide. This is Pelophylaxin-3 from Pelophylax fukienensis (Fukien gold-striped pond frog).